Here is a 341-residue protein sequence, read N- to C-terminus: Phosphate acyltransferase (341 aa).

This sequence belongs to the PlsX family. In terms of assembly, homodimer. Probably interacts with PlsY.

Its subcellular location is the cytoplasm. It carries out the reaction a fatty acyl-[ACP] + phosphate = an acyl phosphate + holo-[ACP]. The protein operates within lipid metabolism; phospholipid metabolism. Catalyzes the reversible formation of acyl-phosphate (acyl-PO(4)) from acyl-[acyl-carrier-protein] (acyl-ACP). This enzyme utilizes acyl-ACP as fatty acyl donor, but not acyl-CoA. This is Phosphate acyltransferase from Pseudoalteromonas atlantica (strain T6c / ATCC BAA-1087).